A 229-amino-acid chain; its full sequence is Protein GLC8 (229 aa).

Disordered stretches follow at residues 1–21, 35–62, and 107–229; these read MGGILKNPLALSPEQLAQQDP, TQKNAKLTSHKRNIPGLDNTKEEGEIIG, and QFQD…TKEP. S12 bears the Phosphoserine mark. Over residues 107–117 the composition is skewed to basic and acidic residues; sequence QFQDIHIDEPK. T118 is modified (phosphothreonine; by PHO85). Residue S158 is modified to Phosphoserine. Positions 164 to 173 are enriched in basic and acidic residues; that stretch reads FEIKENKQPD. A compositionally biased stretch (acidic residues) spans 175 to 184; the sequence is ETNDENDEDS. The residue at position 184 (S184) is a Phosphoserine. The span at 185 to 196 shows a compositional bias: basic and acidic residues; the sequence is PEARHKKFEEMR.

Phosphorylated by the cyclin-CDKs PCL6-PHO85 and PCL7-PHO85. Phosphorylation of Thr-118 inactivates GLC8.

Its function is as follows. Modulator of GLC7 type-1 protein phosphatase. This is Protein GLC8 (GLC8) from Saccharomyces cerevisiae (strain ATCC 204508 / S288c) (Baker's yeast).